A 303-amino-acid polypeptide reads, in one-letter code: MATH domain and coiled-coil domain-containing protein At3g58250 (303 aa).

The MATH domain occupies 8-135 (KKKFSWVIKN…KGELKIVVEI (128 aa)). The stretch at 231–287 (KLDWLKKKLDQVTQKKEKEAAGETRMHEIGEELKDLKLKCSDLEAQLDKEKADVLAA) forms a coiled coil.

The protein is MATH domain and coiled-coil domain-containing protein At3g58250 of Arabidopsis thaliana (Mouse-ear cress).